Reading from the N-terminus, the 258-residue chain is Acetylglutamate kinase (258 aa).

Substrate-binding positions include 44 to 45, Arg66, and Asn158; that span reads GG. ATP contacts are provided by residues 181–186 and 209–211; these read DVSGIL and IIT.

This sequence belongs to the acetylglutamate kinase family. ArgB subfamily. In terms of assembly, homodimer.

It localises to the cytoplasm. The catalysed reaction is N-acetyl-L-glutamate + ATP = N-acetyl-L-glutamyl 5-phosphate + ADP. The protein operates within amino-acid biosynthesis; L-arginine biosynthesis; N(2)-acetyl-L-ornithine from L-glutamate: step 2/4. Functionally, catalyzes the ATP-dependent phosphorylation of N-acetyl-L-glutamate. This chain is Acetylglutamate kinase, found in Shigella flexneri.